A 1168-amino-acid chain; its full sequence is DNA-directed RNA polymerase subunit beta (1168 aa).

This sequence belongs to the RNA polymerase beta chain family. As to quaternary structure, the RNAP catalytic core consists of 2 alpha, 1 beta, 1 beta' and 1 omega subunit. When a sigma factor is associated with the core the holoenzyme is formed, which can initiate transcription.

It carries out the reaction RNA(n) + a ribonucleoside 5'-triphosphate = RNA(n+1) + diphosphate. DNA-dependent RNA polymerase catalyzes the transcription of DNA into RNA using the four ribonucleoside triphosphates as substrates. In Rhodococcus jostii (strain RHA1), this protein is DNA-directed RNA polymerase subunit beta.